Reading from the N-terminus, the 209-residue chain is Orotate phosphoribosyltransferase (209 aa).

Residues arginine 96, lysine 100, histidine 102, and 122–130 contribute to the 5-phospho-alpha-D-ribose 1-diphosphate site; that span reads EDLISTGGS. Position 126 (serine 126) interacts with orotate.

It belongs to the purine/pyrimidine phosphoribosyltransferase family. PyrE subfamily. As to quaternary structure, homodimer. Requires Mg(2+) as cofactor.

The catalysed reaction is orotidine 5'-phosphate + diphosphate = orotate + 5-phospho-alpha-D-ribose 1-diphosphate. It participates in pyrimidine metabolism; UMP biosynthesis via de novo pathway; UMP from orotate: step 1/2. Catalyzes the transfer of a ribosyl phosphate group from 5-phosphoribose 1-diphosphate to orotate, leading to the formation of orotidine monophosphate (OMP). The chain is Orotate phosphoribosyltransferase from Streptococcus agalactiae serotype Ia (strain ATCC 27591 / A909 / CDC SS700).